A 140-amino-acid chain; its full sequence is MKKIVCVAIVGKGNNPLFIQDFSSSITDENKLKLHYIVHCSLDIIEDKPGSNKKLPSDMYLGLLYPTEDYKVYGYLTNTKIKFIIVVLDTSDIKDSDLKLFFKRLQTLFINTTSNPFYKPNSKVESKKFLQEVTNLVPSL.

This sequence belongs to the TRAPP small subunits family. Sedlin subfamily.

In Dictyostelium discoideum (Social amoeba), this protein is Trafficking protein particle complex subunit 2-like protein (trappc2l).